We begin with the raw amino-acid sequence, 297 residues long: Protein LRATD1 (297 aa).

The residue at position 38 (Ser38) is a Phosphoserine. Residues 138–233 (PAPEPPAPAP…CRFGKREFKA (96 aa)) enclose the LRAT domain.

The protein belongs to the LRATD family.

The protein resides in the cytoplasm. May play a role in cell morphology and motility. The protein is Protein LRATD1 (LRATD1) of Bos taurus (Bovine).